The sequence spans 107 residues: Ig kappa chain V region 4135 (107 aa).

Residues 1–24 are framework-1; the sequence is ADIVMTQTPASVSEPVGGTVTIKC. Residues 25–35 are complementarity-determining-1; that stretch reads QTSQSIDDYLS. Residues 36–50 are framework-2; the sequence is WYQQKPGQPPKGLIY. Residues 51 to 57 are complementarity-determining-2; the sequence is RASTLAS. A framework-3 region spans residues 58-89; it reads GVPSRFRGSGSGTDFTLTISDLECADAATYYC. The segment at 90 to 96 is complementarity-determining-3; that stretch reads QSTYGVG. The tract at residues 97–106 is framework-4; that stretch reads FGGGTEVVVK.

The protein is Ig kappa chain V region 4135 of Oryctolagus cuniculus (Rabbit).